A 340-amino-acid chain; its full sequence is tRNA-cytidine(32) 2-sulfurtransferase (340 aa).

The PP-loop motif motif lies at 74 to 79; the sequence is SGGKDS. Cys-149, Cys-152, and Cys-240 together coordinate [4Fe-4S] cluster.

Belongs to the TtcA family. Homodimer. It depends on Mg(2+) as a cofactor. [4Fe-4S] cluster is required as a cofactor.

It is found in the cytoplasm. The catalysed reaction is cytidine(32) in tRNA + S-sulfanyl-L-cysteinyl-[cysteine desulfurase] + AH2 + ATP = 2-thiocytidine(32) in tRNA + L-cysteinyl-[cysteine desulfurase] + A + AMP + diphosphate + H(+). It participates in tRNA modification. In terms of biological role, catalyzes the ATP-dependent 2-thiolation of cytidine in position 32 of tRNA, to form 2-thiocytidine (s(2)C32). The sulfur atoms are provided by the cysteine/cysteine desulfurase (IscS) system. The sequence is that of tRNA-cytidine(32) 2-sulfurtransferase from Burkholderia ambifaria (strain MC40-6).